Consider the following 297-residue polypeptide: Cell division protein FtsX (297 aa).

At 1 to 21 (MRFGFLLNEVLTGFRRNVTMT) the chain is on the cytoplasmic side. Residues 22-42 (IAMILTTAISVGLFGGGMLVV) traverse the membrane as a helical segment. At 43–171 (RLADSSRAIY…LFAVLDGLSN (129 aa)) the chain is on the extracellular side. A helical membrane pass occupies residues 172–192 (AAFAVALVQAIGAILLIANMV). Topologically, residues 193 to 219 (QVAAYTRRTEIGIMRLVGASRWYTQLP) are cytoplasmic. Residues 220 to 240 (FLVEAMLAATMGVGIAVAGLM) form a helical membrane-spanning segment. At 241–267 (VVRALFLENALNQFYQANLIAKVDYAD) the chain is on the extracellular side. A helical transmembrane segment spans residues 268-288 (ILFITPWLLLLGVAMSGLTAY). Residues 289–297 (LTLRLYVRR) are Cytoplasmic-facing.

Belongs to the ABC-4 integral membrane protein family. FtsX subfamily. Forms a membrane-associated complex with FtsE.

It localises to the cell membrane. Functionally, part of the ABC transporter FtsEX involved in cellular division. In Mycobacterium tuberculosis (strain ATCC 25177 / H37Ra), this protein is Cell division protein FtsX.